Consider the following 247-residue polypeptide: MINNYIDITVRLLENILDNEADYVKEAGAKVAESIENDGVIHLFGCGHSHILTEEVFYRAGGLAAIHPILHEPLMLHEGAAASSVLERKNDYAKTFMAEEDIRPGDIMIVLSTSGRNPVPIDVAEIAREKGAFVIVITSLQYSASQKSRHTSGKRLSDAGDIVIDNGAVKGDAVLKSANFDIAFAPTSTVTGAVILQSIFAEAIETMVNDNFTPPVFISGNVENADAHNQALVDKYNERIPLLGMNL.

The SIS domain occupies 31–214 (VAESIENDGV…ETMVNDNFTP (184 aa)).

The protein belongs to the UPF0309 family.

This is UPF0309 protein Lm4b_02611 from Listeria monocytogenes serotype 4b (strain CLIP80459).